The primary structure comprises 365 residues: Cobalt-precorrin-5B C(1)-methyltransferase (365 aa).

This sequence belongs to the CbiD family.

The catalysed reaction is Co-precorrin-5B + S-adenosyl-L-methionine = Co-precorrin-6A + S-adenosyl-L-homocysteine. It participates in cofactor biosynthesis; adenosylcobalamin biosynthesis; cob(II)yrinate a,c-diamide from sirohydrochlorin (anaerobic route): step 6/10. Functionally, catalyzes the methylation of C-1 in cobalt-precorrin-5B to form cobalt-precorrin-6A. This Paraburkholderia phytofirmans (strain DSM 17436 / LMG 22146 / PsJN) (Burkholderia phytofirmans) protein is Cobalt-precorrin-5B C(1)-methyltransferase.